Consider the following 398-residue polypeptide: 4-hydroxy-3-methylbut-2-en-1-yl diphosphate synthase (ferredoxin) (398 aa).

Residues Cys306, Cys309, Cys340, and Glu347 each contribute to the [4Fe-4S] cluster site.

It belongs to the IspG family. It depends on [4Fe-4S] cluster as a cofactor.

It carries out the reaction (2E)-4-hydroxy-3-methylbut-2-enyl diphosphate + 2 oxidized [2Fe-2S]-[ferredoxin] + H2O = 2-C-methyl-D-erythritol 2,4-cyclic diphosphate + 2 reduced [2Fe-2S]-[ferredoxin] + H(+). It functions in the pathway isoprenoid biosynthesis; isopentenyl diphosphate biosynthesis via DXP pathway; isopentenyl diphosphate from 1-deoxy-D-xylulose 5-phosphate: step 5/6. Its function is as follows. Converts 2C-methyl-D-erythritol 2,4-cyclodiphosphate (ME-2,4cPP) into 1-hydroxy-2-methyl-2-(E)-butenyl 4-diphosphate. The protein is 4-hydroxy-3-methylbut-2-en-1-yl diphosphate synthase (ferredoxin) of Synechococcus sp. (strain CC9605).